A 165-amino-acid chain; its full sequence is Protein SprT (165 aa).

Residues 22 to 163 form the SprT-like domain; it reads LAQANLKLDR…RCVHCGEPLV (142 aa). H78 is a Zn(2+) binding site. Residue E79 is part of the active site. H82 is a binding site for Zn(2+).

It belongs to the SprT family. It depends on Zn(2+) as a cofactor.

It localises to the cytoplasm. This is Protein SprT from Salmonella paratyphi C (strain RKS4594).